Here is a 359-residue protein sequence, read N- to C-terminus: Membrane-bound lytic murein transglycosylase C (359 aa).

The N-terminal stretch at 1 to 16 is a signal peptide; it reads MKKYLALALIAPLLIS. The N-palmitoyl cysteine moiety is linked to residue cysteine 17. Residue cysteine 17 is the site of S-diacylglycerol cysteine attachment.

This sequence belongs to the transglycosylase Slt family.

It is found in the cell outer membrane. It carries out the reaction Exolytic cleavage of the (1-&gt;4)-beta-glycosidic linkage between N-acetylmuramic acid (MurNAc) and N-acetylglucosamine (GlcNAc) residues in peptidoglycan, from either the reducing or the non-reducing ends of the peptidoglycan chains, with concomitant formation of a 1,6-anhydrobond in the MurNAc residue.. Functionally, murein-degrading enzyme. May play a role in recycling of muropeptides during cell elongation and/or cell division. The sequence is that of Membrane-bound lytic murein transglycosylase C from Escherichia coli O157:H7.